Consider the following 201-residue polypeptide: Putative 3-methyladenine DNA glycosylase (201 aa).

It belongs to the DNA glycosylase MPG family.

The chain is Putative 3-methyladenine DNA glycosylase from Rhodopseudomonas palustris (strain HaA2).